The following is a 411-amino-acid chain: Protein DDI1 homolog 2 (411 aa).

Residues 1–81 (MLLTVFCAPR…LVLRQAERLR (81 aa)) enclose the Ubiquitin-like domain. Residues 82–144 (APPQPTVPGL…SGVSPQGLDN (63 aa)) form a disordered region. The span at 108 to 121 (QNRNRPQQAQRPST) shows a compositional bias: low complexity. The active site involves Asp262. Residues 387–406 (DEIADRELAEAIQRSVQDSG) carry the Ubiquitin-binding motif.

It belongs to the DDI1 family. In terms of assembly, homodimer.

It localises to the cytoplasm. It is found in the cytosol. Its subcellular location is the chromosome. Functionally, aspartic protease that mediates the cleavage of NFE2L1/NRF1 at 'Leu-104', thereby promoting release of NFE2L1/NRF1 from the endoplasmic reticulum membrane. Ubiquitination of NFE2L1/NRF1 is a prerequisite for cleavage, suggesting that DDI2 specifically recognizes and binds ubiquitinated NFE2L1/NRF1. Seems to act as a proteasomal shuttle which links the proteasome and replication fork proteins like RTF2. Required for cellular survival following replication stress. The sequence is that of Protein DDI1 homolog 2 (ddi2) from Danio rerio (Zebrafish).